Consider the following 41-residue polypeptide: Large ribosomal subunit protein bL36 (41 aa).

Belongs to the bacterial ribosomal protein bL36 family.

This is Large ribosomal subunit protein bL36 from Paracoccus denitrificans (strain Pd 1222).